The primary structure comprises 148 residues: Outer envelope pore protein 16-1, chloroplastic (148 aa).

The interval 2–73 (PSSTFSGTVS…EHALKKLCKE (72 aa)) is contains 4 beta strands. 3 helical membrane-spanning segments follow: residues 75-91 (VYWG…EYGI), 102-118 (NAML…SAVG), and 125-142 (IVID…SQFV).

This sequence belongs to the Tim17/Tim22/Tim23 family. Plastid outer envelope porin OEP16 (TC 1.B.30) subfamily. As to quaternary structure, homodimer and oligomers in membrane. Forms large complexes including TOC33, pPORA and OEP161 during pPORA import into plastids at the plastid envelope membrane. As to expression, expressed predominantly in leaves and cotyledons.

It is found in the plastid. The protein localises to the chloroplast outer membrane. Its subcellular location is the etioplast membrane. Its activity is regulated as follows. Stimulated by GTP. In terms of biological role, voltage-dependent high-conductance channel with a slight cation-selectivity; selective for amino acids but excludes triosephosphates or uncharged sugars. Non-essential amino acid-selective channel protein and translocation pore for NADPH:protochlorophyllide oxidoreductase A (PORA) and possibly PORB. Involved in PORA precursor (pPORA) import and thus confers photoprotection onto etiolated seedlings during greening. This chain is Outer envelope pore protein 16-1, chloroplastic (OEP161), found in Arabidopsis thaliana (Mouse-ear cress).